The following is a 594-amino-acid chain: DNA ligase (594 aa).

An ATP-binding site is contributed by Glu-280. The N6-AMP-lysine intermediate role is filled by Lys-282. 6 residues coordinate ATP: Arg-287, Arg-316, Glu-345, Phe-385, Arg-456, and Lys-462.

This sequence belongs to the ATP-dependent DNA ligase family. Requires Mg(2+) as cofactor.

It catalyses the reaction ATP + (deoxyribonucleotide)n-3'-hydroxyl + 5'-phospho-(deoxyribonucleotide)m = (deoxyribonucleotide)n+m + AMP + diphosphate.. Functionally, DNA ligase that seals nicks in double-stranded DNA during DNA replication, DNA recombination and DNA repair. In Halorubrum lacusprofundi (strain ATCC 49239 / DSM 5036 / JCM 8891 / ACAM 34), this protein is DNA ligase.